The chain runs to 238 residues: Small heat shock protein, chloroplastic (238 aa).

Residues 31 to 87 (APLSTGGRTRPLSVASAAQENRDNSVDVQVSQAQNAGNQQGNAVQRRPRRAGFDISP) are disordered. The segment covering 58-75 (VQVSQAQNAGNQQGNAVQ) has biased composition (low complexity). Positions 124–238 (AARARRRMPW…ERKVIDVQVQ (115 aa)) constitute a sHSP domain.

It belongs to the small heat shock protein (HSP20) family.

The protein resides in the plastid. It is found in the chloroplast. The chain is Small heat shock protein, chloroplastic (HSP21) from Triticum aestivum (Wheat).